The primary structure comprises 145 residues: Peptide methionine sulfoxide reductase MsrB (145 aa).

The region spanning 4-127 is the MsrB domain; sequence KEELRQRIGD…NSAALKFIPY (124 aa). Cysteine 116 (nucleophile) is an active-site residue.

The protein belongs to the MsrB Met sulfoxide reductase family.

The catalysed reaction is L-methionyl-[protein] + [thioredoxin]-disulfide + H2O = L-methionyl-(R)-S-oxide-[protein] + [thioredoxin]-dithiol. In Streptococcus equi subsp. zooepidemicus (strain H70), this protein is Peptide methionine sulfoxide reductase MsrB.